The following is a 485-amino-acid chain: Glutamyl-tRNA(Gln) amidotransferase subunit A (485 aa).

Residues K78 and S153 each act as charge relay system in the active site. S177 acts as the Acyl-ester intermediate in catalysis.

The protein belongs to the amidase family. GatA subfamily. As to quaternary structure, heterotrimer of A, B and C subunits.

The catalysed reaction is L-glutamyl-tRNA(Gln) + L-glutamine + ATP + H2O = L-glutaminyl-tRNA(Gln) + L-glutamate + ADP + phosphate + H(+). Allows the formation of correctly charged Gln-tRNA(Gln) through the transamidation of misacylated Glu-tRNA(Gln) in organisms which lack glutaminyl-tRNA synthetase. The reaction takes place in the presence of glutamine and ATP through an activated gamma-phospho-Glu-tRNA(Gln). The sequence is that of Glutamyl-tRNA(Gln) amidotransferase subunit A from Lawsonia intracellularis (strain PHE/MN1-00).